The primary structure comprises 398 residues: Chalcone synthase (398 aa).

Cys169 is a catalytic residue.

This sequence belongs to the thiolase-like superfamily. Chalcone/stilbene synthases family.

The catalysed reaction is (E)-4-coumaroyl-CoA + 3 malonyl-CoA + 3 H(+) = 2',4,4',6'-tetrahydroxychalcone + 3 CO2 + 4 CoA. Its pathway is secondary metabolite biosynthesis; flavonoid biosynthesis. The primary product of this enzyme is 4,2',4',6'-tetrahydroxychalcone (also termed naringenin-chalcone or chalcone) which can under specific conditions spontaneously isomerize into naringenin. The sequence is that of Chalcone synthase (CHS) from Petroselinum crispum (Parsley).